The primary structure comprises 128 residues: Large ribosomal subunit protein bL20c (128 aa).

Belongs to the bacterial ribosomal protein bL20 family.

The protein localises to the plastid. Binds directly to 23S ribosomal RNA and is necessary for the in vitro assembly process of the 50S ribosomal subunit. It is not involved in the protein synthesizing functions of that subunit. In Epifagus virginiana (Beechdrops), this protein is Large ribosomal subunit protein bL20c (rpl20).